We begin with the raw amino-acid sequence, 359 residues long: Probable F-box protein At3g61730 (359 aa).

Composition is skewed to basic and acidic residues over residues 1 to 14 and 37 to 48; these read MKTR…DSRG and QKNDIQREEDGR. The interval 1–60 is disordered; sequence MKTRSSDAEGDSRGKMIAPVGEGNGGRKRKLVQSNEQKNDIQREEDGRAKRRIVQSSDQK. An F-box; degenerate domain is found at 82–128; the sequence is QSRFSWYEQDIWTYISRFLDGKSLVKLGATNKWFYKIAMEDTVWRFA.

As to quaternary structure, interacts with SKP1A. As to expression, expressed in flower buds, developing anthers, pollen grains, siliques, rosette leaves and roots. Detected at lower levels in open flowers, stems and cauline leaves. Expressed in young seedling in the hydathodes, shoot apical meristem, root tips and lateral root primordia.

It is found in the nucleus. Functionally, regulates tapetum degeneration and pollen maturation during anther development. The protein is Probable F-box protein At3g61730 (RMF) of Arabidopsis thaliana (Mouse-ear cress).